The primary structure comprises 453 residues: tRNA-2-methylthio-N(6)-dimethylallyladenosine synthase (453 aa).

An MTTase N-terminal domain is found at 11–131 (KSFHVKSFGC…LPQLVADAAE (121 aa)). [4Fe-4S] cluster contacts are provided by Cys-20, Cys-56, Cys-94, Cys-167, Cys-171, and Cys-174. Residues 153–385 (RRQGPTAFLT…QALLNEQQHR (233 aa)) form the Radical SAM core domain. Residues 388 to 449 (LATVGKRCEV…PNSLSGALVE (62 aa)) form the TRAM domain.

This sequence belongs to the methylthiotransferase family. MiaB subfamily. As to quaternary structure, monomer. It depends on [4Fe-4S] cluster as a cofactor.

The protein localises to the cytoplasm. It carries out the reaction N(6)-dimethylallyladenosine(37) in tRNA + (sulfur carrier)-SH + AH2 + 2 S-adenosyl-L-methionine = 2-methylsulfanyl-N(6)-dimethylallyladenosine(37) in tRNA + (sulfur carrier)-H + 5'-deoxyadenosine + L-methionine + A + S-adenosyl-L-homocysteine + 2 H(+). Its function is as follows. Catalyzes the methylthiolation of N6-(dimethylallyl)adenosine (i(6)A), leading to the formation of 2-methylthio-N6-(dimethylallyl)adenosine (ms(2)i(6)A) at position 37 in tRNAs that read codons beginning with uridine. The protein is tRNA-2-methylthio-N(6)-dimethylallyladenosine synthase of Rhizorhabdus wittichii (strain DSM 6014 / CCUG 31198 / JCM 15750 / NBRC 105917 / EY 4224 / RW1) (Sphingomonas wittichii).